The primary structure comprises 396 residues: MSTTQQPHWSLQKSFAERVESSSHPLTSYLFRLMEVKQSNLCLSADVEHARELLALADKIGPSIVVLKTHYDLITGWDYHPHTGTGAKLAALARKHGFLIFEDRKFVDIGSTVQKQYTAGTARIVEWAHITNADIHAGEAMVSAMAQAAQKWRERIPYEVKTSVSVGTPVADQFADEEAEDQVDELRKIVPRENSTSKEKDTDGRKGSIVSITTVTQTYEPADSPRLAKTISEGDEAVFPGIEEAPLDRGLLILAQMSSKGCLMDGKYTWECVKAARKNKDFVMGYVAQQNLNGITKEDLAPGYEDGETSTEEEAQADNFIHMTPGCKLPPPGEEAPQGDGLGQQYNTPDNLVNIKGTDIAIVGRGIITASDPPAEAERYRRKAWKAYQDRRERLA.

Substrate is bound by residues Asp46, 68 to 70 (KTH), 103 to 112 (DRKFVDIGST), Tyr346, and Arg365. Lys105 (proton donor) is an active-site residue.

The protein belongs to the OMP decarboxylase family.

It carries out the reaction orotidine 5'-phosphate + H(+) = UMP + CO2. It participates in pyrimidine metabolism; UMP biosynthesis via de novo pathway; UMP from orotate: step 2/2. In Sordaria macrospora (strain ATCC MYA-333 / DSM 997 / K(L3346) / K-hell), this protein is Orotidine 5'-phosphate decarboxylase (URA3).